We begin with the raw amino-acid sequence, 530 residues long: Feruloyl esterase C (530 aa).

The first 25 residues, 1-25 (MMLTSAILLLTLGVQLSHADDSSRE), serve as a signal peptide directing secretion. Intrachain disulfides connect C31/C78, C66/C117, C190/C444, C259/C276, C285/C294, and C506/C528. Residue S191 is the Acyl-ester intermediate of the active site. Ca(2+)-binding residues include D260, D263, A265, D267, and V269. Catalysis depends on charge relay system residues D403 and H443.

Belongs to the tannase family.

It localises to the secreted. The catalysed reaction is feruloyl-polysaccharide + H2O = ferulate + polysaccharide.. Its function is as follows. Involved in degradation of plant cell walls. Hydrolyzes the feruloyl-arabinose ester bond in arabinoxylans as well as the feruloyl-galactose and feruloyl-arabinose ester bonds in pectin. Active against methyl esters of sinapate (MSA) and caffeate (MCA). The polypeptide is Feruloyl esterase C (faeC) (Talaromyces stipitatus (strain ATCC 10500 / CBS 375.48 / QM 6759 / NRRL 1006) (Penicillium stipitatum)).